A 141-amino-acid chain; its full sequence is Large ribosomal subunit protein uL11 (141 aa).

It belongs to the universal ribosomal protein uL11 family. Part of the ribosomal stalk of the 50S ribosomal subunit. Interacts with L10 and the large rRNA to form the base of the stalk. L10 forms an elongated spine to which L12 dimers bind in a sequential fashion forming a multimeric L10(L12)X complex. One or more lysine residues are methylated.

Functionally, forms part of the ribosomal stalk which helps the ribosome interact with GTP-bound translation factors. This is Large ribosomal subunit protein uL11 from Streptococcus equi subsp. equi (strain 4047).